Here is a 321-residue protein sequence, read N- to C-terminus: Peroxidase 70 (321 aa).

The first 25 residues, 1 to 25 (MASSSFTSLSVMVLLCLAAAAVASA), serve as a signal peptide directing secretion. Gln26 is subject to Pyrrolidone carboxylic acid. 4 disulfide bridges follow: Cys36–Cys116, Cys69–Cys74, Cys122–Cys317, and Cys201–Cys226. The Proton acceptor role is filled by His67. Positions 68, 71, 73, 75, and 77 each coordinate Ca(2+). N-linked (GlcNAc...) asparagine glycosylation occurs at Asn81. Residue Pro164 coordinates substrate. N-linked (GlcNAc...) asparagine glycosylation is present at Asn172. Residue His194 coordinates heme b. Residue Thr195 coordinates Ca(2+). The N-linked (GlcNAc...) asparagine glycan is linked to Asn210. Residues Asp241, Thr244, and Asp249 each contribute to the Ca(2+) site.

It belongs to the peroxidase family. Classical plant (class III) peroxidase subfamily. Requires heme b as cofactor. Ca(2+) is required as a cofactor.

It is found in the secreted. It catalyses the reaction 2 a phenolic donor + H2O2 = 2 a phenolic radical donor + 2 H2O. In terms of biological role, removal of H(2)O(2), oxidation of toxic reductants, biosynthesis and degradation of lignin, suberization, auxin catabolism, response to environmental stresses such as wounding, pathogen attack and oxidative stress. These functions might be dependent on each isozyme/isoform in each plant tissue. In Zea mays (Maize), this protein is Peroxidase 70 (PER70).